Here is a 243-residue protein sequence, read N- to C-terminus: 1-(5-phosphoribosyl)-5-[(5-phosphoribosylamino)methylideneamino] imidazole-4-carboxamide isomerase (243 aa).

The active-site Proton acceptor is the Asp8. Asp129 acts as the Proton donor in catalysis.

This sequence belongs to the HisA/HisF family.

It is found in the cytoplasm. It catalyses the reaction 1-(5-phospho-beta-D-ribosyl)-5-[(5-phospho-beta-D-ribosylamino)methylideneamino]imidazole-4-carboxamide = 5-[(5-phospho-1-deoxy-D-ribulos-1-ylimino)methylamino]-1-(5-phospho-beta-D-ribosyl)imidazole-4-carboxamide. It participates in amino-acid biosynthesis; L-histidine biosynthesis; L-histidine from 5-phospho-alpha-D-ribose 1-diphosphate: step 4/9. This is 1-(5-phosphoribosyl)-5-[(5-phosphoribosylamino)methylideneamino] imidazole-4-carboxamide isomerase from Carboxydothermus hydrogenoformans (strain ATCC BAA-161 / DSM 6008 / Z-2901).